We begin with the raw amino-acid sequence, 200 residues long: 3-isopropylmalate dehydratase small subunit (200 aa).

The protein belongs to the LeuD family. LeuD type 1 subfamily. As to quaternary structure, heterodimer of LeuC and LeuD.

It carries out the reaction (2R,3S)-3-isopropylmalate = (2S)-2-isopropylmalate. It participates in amino-acid biosynthesis; L-leucine biosynthesis; L-leucine from 3-methyl-2-oxobutanoate: step 2/4. Its function is as follows. Catalyzes the isomerization between 2-isopropylmalate and 3-isopropylmalate, via the formation of 2-isopropylmaleate. In Photobacterium profundum (strain SS9), this protein is 3-isopropylmalate dehydratase small subunit.